We begin with the raw amino-acid sequence, 351 residues long: Leukotriene B4 receptor 1 (351 aa).

The Extracellular portion of the chain corresponds to 1–21 (MAANTTSTAATSSPGGMSLSL). The N-linked (GlcNAc...) asparagine glycan is linked to Asn4. The helical transmembrane segment at 22–44 (LPIVLLSVALVVGLPGNSFVVWS) threads the bilayer. The Cytoplasmic portion of the chain corresponds to 45-56 (ILKRMQKRSVTA). Residues 57–77 (LLVLNLALADLAVLLTAPFFL) traverse the membrane as a helical segment. The Extracellular portion of the chain corresponds to 78–93 (HFLARGTWSFEVTGCR). Residues 94 to 115 (LCHYVCGVSMYASVLLITIMSL) form a helical membrane-spanning segment. Residues 116 to 140 (DRSLAVARPFVSQKVRTKAFARWVL) are Cytoplasmic-facing. Residues 141-161 (AGIWVVSFLLAIPVLVYRTVT) traverse the membrane as a helical segment. Topologically, residues 162–179 (PKNKTLICDSRYPSDGHK) are extracellular. Residue Asn164 is glycosylated (N-linked (GlcNAc...) asparagine). The chain crosses the membrane as a helical span at residues 180–200 (VFHLLFEAITGFLLPFLAVVA). At 201-222 (SYSDIGRRLQARRFRRSRRTGR) the chain is on the cytoplasmic side. Residues 223–243 (LVVLIILAFAAFWLPYHLVNL) traverse the membrane as a helical segment. Residues 244-268 (VEAGRTLAGWDKNSPAGQRLKLARY) are Extracellular-facing. Residues 269-289 (VLIALAFLSSSVNPVLYACAG) traverse the membrane as a helical segment. At 290–351 (GGLLRSAGVG…TSSTPPESSK (62 aa)) the chain is on the cytoplasmic side. Polar residues-rich tracts occupy residues 311-327 (EVSS…TPKA) and 339-351 (SFMT…ESSK). The interval 311–351 (EVSSTRRGGTLVQTPKATPTCPEPGPTDSFMTSSTPPESSK) is disordered.

This sequence belongs to the G-protein coupled receptor 1 family. Post-translationally, phosphorylated by GRK6 upon leukotriene B4 binding; which promotes desensitization. As to expression, exclusively expressed in polymorphonuclear leukocytes.

It is found in the cell membrane. In terms of biological role, receptor for leukotriene B4, a potent chemoattractant involved in inflammation and immune response. The sequence is that of Leukotriene B4 receptor 1 (Ltb4r) from Rattus norvegicus (Rat).